The sequence spans 483 residues: Pentatricopeptide repeat-containing protein At5g18950 (483 aa).

PPR repeat units follow at residues 144–178, 179–213, 218–246, 247–281, 282–316, 317–351, 352–386, 387–421, and 422–456; these read EPTLLEQYVKCLSEEGLVEEAIEVYNVLKDMGISS, SVVTCNSVLLGCLKARKLDRFWELHKEMVESEFDS, CLIRALCDGGDVSEGYELLKQGLKQGLDP, GQYVYAKLISGFCEIGNYACMSEVLHTMIAWNHFP, SMYIYQKIIKGLCMNKKQLEAYCIFKNLKDKGYAP, DRVVYTTMIRGFCEKGWLGSARKLWFEMIKKGMRP, NEFAYNVMIHGHFKRGEISLVEAFYNEMLRNGYGG, TMLSCNTMIKGFCSHGKSDEAFEIFKNMSETGVTP, and NAITYNALIKGFCKENKVEKGLKLYKELKALGLKP.

It belongs to the PPR family. P subfamily.

The chain is Pentatricopeptide repeat-containing protein At5g18950 from Arabidopsis thaliana (Mouse-ear cress).